We begin with the raw amino-acid sequence, 727 residues long: Glycerol-3-phosphate dehydrogenase, mitochondrial (727 aa).

The N-terminal 42 residues, 1 to 42 (MAFQKAVKGTILVGGGALATVLGLSQFAHYRRKQMNLAYVKA), are a transit peptide targeting the mitochondrion. 71 to 99 (DILVIGGGATGSGCALDAVTRGLKTALVE) lines the FAD pocket. The residue at position 601 (Tyr601) is a Phosphotyrosine. EF-hand domains lie at 623–658 (SDID…INVQ) and 659–694 (MDEN…IQKG). 5 residues coordinate Ca(2+): Asp672, Asn674, Asn676, Gln678, and Glu683.

Belongs to the FAD-dependent glycerol-3-phosphate dehydrogenase family. FAD serves as cofactor.

The protein resides in the mitochondrion. It catalyses the reaction a quinone + sn-glycerol 3-phosphate = dihydroxyacetone phosphate + a quinol. Its pathway is polyol metabolism; glycerol degradation via glycerol kinase pathway; glycerone phosphate from sn-glycerol 3-phosphate (aerobic route): step 1/1. Calcium-binding enhance the activity of the enzyme. Its function is as follows. Calcium-responsive mitochondrial glycerol-3-phosphate dehydrogenase which seems to be a key component of the pancreatic beta-cell glucose-sensing device. The chain is Glycerol-3-phosphate dehydrogenase, mitochondrial (GPD2) from Macaca fascicularis (Crab-eating macaque).